The chain runs to 417 residues: Histidine--tRNA ligase (417 aa).

Belongs to the class-II aminoacyl-tRNA synthetase family. In terms of assembly, homodimer.

The protein resides in the cytoplasm. The catalysed reaction is tRNA(His) + L-histidine + ATP = L-histidyl-tRNA(His) + AMP + diphosphate + H(+). This chain is Histidine--tRNA ligase, found in Caldanaerobacter subterraneus subsp. tengcongensis (strain DSM 15242 / JCM 11007 / NBRC 100824 / MB4) (Thermoanaerobacter tengcongensis).